Consider the following 541-residue polypeptide: Protein wntless homolog (541 aa).

Over 1-15 the chain is Cytoplasmic; sequence MAGAIIENMSTKKLC. Residues 16–36 form a helical membrane-spanning segment; it reads IVGGILLVFQIVAFLVGGLIA. Residues 37–232 lie on the Lumenal side of the membrane; the sequence is PAPTTAVPYT…GIHQNGGFTK (196 aa). The interval 101–232 is interaction with Wnt proteins; the sequence is MEMSPWFQFM…GIHQNGGFTK (132 aa). The helical transmembrane segment at 233–253 threads the bilayer; sequence VWFAMKTFLTPSIFIIMVWYW. Over 254 to 268 the chain is Cytoplasmic; that stretch reads RRITMMSRPPVLLEK. The chain crosses the membrane as a helical span at residues 269-289; the sequence is VIFALGISMTFINIPVEWFSI. Residues 290-303 lie on the Lumenal side of the membrane; it reads GFDWTWMLLFGDIR. A helical transmembrane segment spans residues 304 to 324; it reads QGIFYAMLLSFWIIFCGEHMM. Residues 325–331 lie on the Cytoplasmic side of the membrane; sequence DQHERNH. A helical membrane pass occupies residues 332 to 352; that stretch reads IAGYWKQVGPIAVGSFCLFIF. Over 353 to 380 the chain is Lumenal; it reads DMCERGVQLTNPFYSIWTTDVGTELAMA. Residues 381–401 form a helical membrane-spanning segment; that stretch reads FIIVAGICLCLYFLFLCFMVF. The Cytoplasmic segment spans residues 402–431; the sequence is QVFRNISGKQSSLPAMSKVRRLHYEGLIFR. A helical membrane pass occupies residues 432-452; it reads FKFLMLITLACAAMTVIFFIV. The Lumenal portion of the chain corresponds to 453 to 471; the sequence is SQVSEGHWKWGGVTVQVSS. The chain crosses the membrane as a helical span at residues 472–492; the sequence is AFFTGIYGMWNLYVFALMFLY. Residues 493–541 are Cytoplasmic-facing; sequence APSHKNYGEDQSNGDLGVHSGEELQLTTTITHVDGPTEIYKLTRKEAQE.

The protein belongs to the wntless family. As to quaternary structure, interacts with WNT3A. Interacts with WNT1, WNT3 and WNT5. In terms of processing, N-glycosylated. In terms of tissue distribution, expressed in the brain, skeletal muscle, heart muscle, lung, gut, liver, and kidney (at protein level). In the brain, expressed in the cortex, striatum, hippocampus and to a lesser extent in the cerebellum (at protein level). Expressed in kidney, lung, skin, intestine, brain, spinal cord, skeleton, eyes, excretion glands, tooth and palatal shelves. In the cerebellum, expressed in Purkinje cells.

The protein localises to the golgi apparatus membrane. Its subcellular location is the cytoplasmic vesicle membrane. It is found in the cell membrane. The protein resides in the endoplasmic reticulum membrane. It localises to the early endosome membrane. Functionally, regulates Wnt proteins sorting and secretion in a feedback regulatory mechanism. This reciprocal interaction plays a key role in the regulation of expression, subcellular location, binding and organelle-specific association of Wnt proteins. Also plays an important role in establishment of the anterior-posterior body axis formation during development. The sequence is that of Protein wntless homolog (Wls) from Mus musculus (Mouse).